A 364-amino-acid chain; its full sequence is UDP-N-acetylglucosamine--N-acetylmuramyl-(pentapeptide) pyrophosphoryl-undecaprenol N-acetylglucosamine transferase (364 aa).

UDP-N-acetyl-alpha-D-glucosamine contacts are provided by residues 10-12 (TGG), Asn-126, Arg-167, Ser-199, Ile-253, and Gln-298.

The protein belongs to the glycosyltransferase 28 family. MurG subfamily.

Its subcellular location is the cell inner membrane. The enzyme catalyses di-trans,octa-cis-undecaprenyl diphospho-N-acetyl-alpha-D-muramoyl-L-alanyl-D-glutamyl-meso-2,6-diaminopimeloyl-D-alanyl-D-alanine + UDP-N-acetyl-alpha-D-glucosamine = di-trans,octa-cis-undecaprenyl diphospho-[N-acetyl-alpha-D-glucosaminyl-(1-&gt;4)]-N-acetyl-alpha-D-muramoyl-L-alanyl-D-glutamyl-meso-2,6-diaminopimeloyl-D-alanyl-D-alanine + UDP + H(+). It participates in cell wall biogenesis; peptidoglycan biosynthesis. Functionally, cell wall formation. Catalyzes the transfer of a GlcNAc subunit on undecaprenyl-pyrophosphoryl-MurNAc-pentapeptide (lipid intermediate I) to form undecaprenyl-pyrophosphoryl-MurNAc-(pentapeptide)GlcNAc (lipid intermediate II). This Amoebophilus asiaticus (strain 5a2) protein is UDP-N-acetylglucosamine--N-acetylmuramyl-(pentapeptide) pyrophosphoryl-undecaprenol N-acetylglucosamine transferase.